A 128-amino-acid chain; its full sequence is Large ribosomal subunit protein bL19 (128 aa).

This sequence belongs to the bacterial ribosomal protein bL19 family.

Functionally, this protein is located at the 30S-50S ribosomal subunit interface and may play a role in the structure and function of the aminoacyl-tRNA binding site. The polypeptide is Large ribosomal subunit protein bL19 (Aromatoleum aromaticum (strain DSM 19018 / LMG 30748 / EbN1) (Azoarcus sp. (strain EbN1))).